Here is a 94-residue protein sequence, read N- to C-terminus: CRISPR-associated endoribonuclease Cas2 (94 aa).

Asp11 lines the Mg(2+) pocket.

This sequence belongs to the CRISPR-associated endoribonuclease Cas2 protein family. Homodimer, forms a heterotetramer with a Cas1 homodimer. Mg(2+) is required as a cofactor.

Its function is as follows. CRISPR (clustered regularly interspaced short palindromic repeat), is an adaptive immune system that provides protection against mobile genetic elements (viruses, transposable elements and conjugative plasmids). CRISPR clusters contain sequences complementary to antecedent mobile elements and target invading nucleic acids. CRISPR clusters are transcribed and processed into CRISPR RNA (crRNA). Functions as a ssRNA-specific endoribonuclease. Involved in the integration of spacer DNA into the CRISPR cassette. This chain is CRISPR-associated endoribonuclease Cas2, found in Allochromatium vinosum (strain ATCC 17899 / DSM 180 / NBRC 103801 / NCIMB 10441 / D) (Chromatium vinosum).